The primary structure comprises 273 residues: SPRY domain-containing SOCS box protein 4 (273 aa).

Residues 34–233 enclose the B30.2/SPRY domain; the sequence is PARLDQLLDM…MRYINGLDPE (200 aa). An SOCS box domain is found at 234-273; sequence PLPLMDLCRRSIRSALGRQRLRDIGSLPLPQSLKNYLQYQ.

Belongs to the SPSB family. Component of the probable ECS(SPSB4) E3 ubiquitin-protein ligase complex which contains CUL5, RNF7/RBX2, Elongin BC complex and SPSB4. Interacts with CUL5; RNF7; ELOB and ELOC. Interacts with MET. Interacts (via B30.2/SPRY domain) with PAWR; this interaction occurs in association with the Elongin BC complex. Interacts with NOS2. Interacts with EPHB2.

It is found in the cytoplasm. The protein localises to the cytosol. Its pathway is protein modification; protein ubiquitination. In terms of biological role, substrate recognition component of a SCF-like ECS (Elongin BC-CUL2/5-SOCS-box protein) E3 ubiquitin-protein ligase complex which mediates the ubiquitination and subsequent proteasomal degradation of target proteins. Negatively regulates nitric oxide (NO) production and limits cellular toxicity in activated macrophages by mediating the ubiquitination and proteasomal degradation of NOS2. Acts as a bridge which links NOS2 with the ECS E3 ubiquitin ligase complex components ELOC and CUL5. Diminishes EphB2-dependent cell repulsive responses by mediating the ubiquitination and degradation of the EphB2/CTF2. Regulates cellular clock function by mediating ubiquitination and proteasomal degradation of the circadian transcriptional repressor NR1D1. This chain is SPRY domain-containing SOCS box protein 4 (Spsb4), found in Mus musculus (Mouse).